The primary structure comprises 125 residues: Small ribosomal subunit protein uS12m (125 aa).

This sequence belongs to the universal ribosomal protein uS12 family.

It localises to the mitochondrion. Functionally, protein S12 is involved in the translation initiation step. This Brassica napus (Rape) protein is Small ribosomal subunit protein uS12m (RPS12).